Consider the following 66-residue polypeptide: Large ribosomal subunit protein bL33 (66 aa).

The protein belongs to the bacterial ribosomal protein bL33 family.

The chain is Large ribosomal subunit protein bL33 from Synechococcus sp. (strain CC9902).